The chain runs to 185 residues: Ribosome-recycling factor (185 aa).

This sequence belongs to the RRF family.

It localises to the cytoplasm. Functionally, responsible for the release of ribosomes from messenger RNA at the termination of protein biosynthesis. May increase the efficiency of translation by recycling ribosomes from one round of translation to another. This chain is Ribosome-recycling factor, found in Campylobacter jejuni (strain RM1221).